Reading from the N-terminus, the 724-residue chain is uncharacterized protein (724 aa).

Disordered stretches follow at residues 97–131 (RKSF…YPSP), 187–252 (ETKI…FETE), 309–434 (FETE…TSKL), and 454–473 (RGVE…VAEK). Over residues 115 to 128 (TRSASYSESNNSFY) the composition is skewed to polar residues. Residues 187–217 (ETKIGIEEENEESEILAEEKEEEDNDFSVLE) adopt a coiled-coil conformation. Residues 193 to 212 (EEENEESEILAEEKEEEDND) are compositionally biased toward acidic residues. Basic and acidic residues-rich tracts occupy residues 223–252 (QEIK…FETE) and 309–322 (FETE…DHSE). Composition is skewed to low complexity over residues 323-333 (TTTSETDSTES) and 347-366 (SPQT…SLRS). The segment covering 367-388 (QPPPPPPSPEHKAPAPPPPPPM) has biased composition (pro residues). A compositionally biased stretch (polar residues) spans 400-410 (FSKTHSTNGDN). Coiled coils occupy residues 495–522 (SYFQ…HSFQ) and 649–678 (MELA…RAKR).

This is an uncharacterized protein from Arabidopsis thaliana (Mouse-ear cress).